Here is a 381-residue protein sequence, read N- to C-terminus: tRNA-specific 2-thiouridylase MnmA (381 aa).

ATP contacts are provided by residues 26–33 and Leu-52; that span reads AMSGGVDS. The active-site Nucleophile is the Cys-120. Cys-120 and Cys-217 are disulfide-bonded. Residue Gly-144 participates in ATP binding. Residues 166 to 168 are interaction with tRNA; the sequence is RDQ. The active-site Cysteine persulfide intermediate is the Cys-217.

The protein belongs to the MnmA/TRMU family.

The protein resides in the cytoplasm. The enzyme catalyses S-sulfanyl-L-cysteinyl-[protein] + uridine(34) in tRNA + AH2 + ATP = 2-thiouridine(34) in tRNA + L-cysteinyl-[protein] + A + AMP + diphosphate + H(+). In terms of biological role, catalyzes the 2-thiolation of uridine at the wobble position (U34) of tRNA, leading to the formation of s(2)U34. This chain is tRNA-specific 2-thiouridylase MnmA, found in Ruegeria sp. (strain TM1040) (Silicibacter sp.).